Consider the following 525-residue polypeptide: tRNA-2-methylthio-N(6)-dimethylallyladenosine synthase (525 aa).

One can recognise an MTTase N-terminal domain in the interval 14–130 (RTYQVRTYGC…LPTLLERARH (117 aa)). Residues Cys-23, Cys-59, Cys-93, Cys-167, Cys-171, and Cys-174 each contribute to the [4Fe-4S] cluster site. The Radical SAM core domain occupies 153-400 (RESAYAGWVS…IELQERISLE (248 aa)). In terms of domain architecture, TRAM spans 403–482 (QAQVGRTLEL…PHHLIADGAL (80 aa)).

Belongs to the methylthiotransferase family. MiaB subfamily. As to quaternary structure, monomer. It depends on [4Fe-4S] cluster as a cofactor.

It localises to the cytoplasm. The catalysed reaction is N(6)-dimethylallyladenosine(37) in tRNA + (sulfur carrier)-SH + AH2 + 2 S-adenosyl-L-methionine = 2-methylsulfanyl-N(6)-dimethylallyladenosine(37) in tRNA + (sulfur carrier)-H + 5'-deoxyadenosine + L-methionine + A + S-adenosyl-L-homocysteine + 2 H(+). In terms of biological role, catalyzes the methylthiolation of N6-(dimethylallyl)adenosine (i(6)A), leading to the formation of 2-methylthio-N6-(dimethylallyl)adenosine (ms(2)i(6)A) at position 37 in tRNAs that read codons beginning with uridine. The sequence is that of tRNA-2-methylthio-N(6)-dimethylallyladenosine synthase from Mycobacterium sp. (strain MCS).